The chain runs to 525 residues: GMP synthase [glutamine-hydrolyzing] (525 aa).

The 199-residue stretch at 9–207 folds into the Glutamine amidotransferase type-1 domain; the sequence is RILILDFGSQ…VLDICGCAAL (199 aa). Cys86 (nucleophile) is an active-site residue. Catalysis depends on residues His181 and Glu183. The GMPS ATP-PPase domain maps to 208 to 400; that stretch reads WTPSNIVDDA…LGLPYDMVYR (193 aa). Residue 235-241 coordinates ATP; that stretch reads SGGVDSS.

As to quaternary structure, homodimer.

The enzyme catalyses XMP + L-glutamine + ATP + H2O = GMP + L-glutamate + AMP + diphosphate + 2 H(+). Its pathway is purine metabolism; GMP biosynthesis; GMP from XMP (L-Gln route): step 1/1. Functionally, catalyzes the synthesis of GMP from XMP. This Pseudomonas aeruginosa (strain UCBPP-PA14) protein is GMP synthase [glutamine-hydrolyzing].